The chain runs to 350 residues: Thioredoxin-like fold domain-containing protein MRL7L, chloroplastic (350 aa).

The transit peptide at 1–48 (MILPFSTQFTCPVQDNGFSPSSLLSHCKRDRFEVTSLRYDSFGSVKTA) directs the protein to the chloroplast. 2 disordered regions span residues 78-107 (KKEE…LDDP) and 182-201 (NEKK…DSEK). Composition is skewed to acidic residues over residues 82–93 (DSDSEDEEDEVK) and 186–200 (EEED…DDSE).

The protein resides in the plastid. The protein localises to the chloroplast stroma. It localises to the nucleus. In terms of biological role, plays an essential role in early steps of chloroplast development. Involved in the regulation of plastid gene expression. Required for the proper function of the plastid transcriptional machinery and protein accumulation in thylakoid membranes. May function as molecular chaperone to ensure proper organization of the nucleoids in chloroplasts. Is a necessary component of phytochrome signaling for photosynthesis-associated plastid-encoded genes (PhAPGs) activation. Mediates the degradation of two repressors of chloroplast biogenesis, PIF1 and PIF3 in nucleus. Promotes the assembly of the plastid-encoded RNA polymerase (PEP) complex for PhAPG transcription in plastids. The polypeptide is Thioredoxin-like fold domain-containing protein MRL7L, chloroplastic (Arabidopsis thaliana (Mouse-ear cress)).